We begin with the raw amino-acid sequence, 299 residues long: Homoserine O-acetyltransferase (299 aa).

Cys-142 serves as the catalytic Acyl-thioester intermediate. Residues Lys-163 and Ser-192 each coordinate substrate. Catalysis depends on His-235, which acts as the Proton acceptor. Glu-237 is a catalytic residue. A substrate-binding site is contributed by Arg-249.

The protein belongs to the MetA family.

Its subcellular location is the cytoplasm. The catalysed reaction is L-homoserine + acetyl-CoA = O-acetyl-L-homoserine + CoA. It participates in amino-acid biosynthesis; L-methionine biosynthesis via de novo pathway; O-acetyl-L-homoserine from L-homoserine: step 1/1. Transfers an acetyl group from acetyl-CoA to L-homoserine, forming acetyl-L-homoserine. The sequence is that of Homoserine O-acetyltransferase from Synechococcus elongatus (strain ATCC 33912 / PCC 7942 / FACHB-805) (Anacystis nidulans R2).